The following is a 455-amino-acid chain: E3 ubiquitin-protein ligase IPI1 (455 aa).

Positions 1–42 (MGAEEEEEPASAVGREGGGGGGGARAAGAGAGGDTADDDDSG) are disordered. Residues 15–33 (REGGGGGGGARAAGAGAGG) show a composition bias toward gly residues. The RING-type; atypical zinc-finger motif lies at 51-97 (CSICLDAVVAGGGDRSTARLQCGHEFHLDCIGSAFNAKGVMQCPNCR). Disordered regions lie at residues 286 to 311 (LDSD…SRIP) and 426 to 455 (QWIG…IPRM). The span at 433-442 (SPPPPPPPPA) shows a compositional bias: pro residues.

As to quaternary structure, interacts with SPL14/IPA1.

It localises to the nucleus. It catalyses the reaction S-ubiquitinyl-[E2 ubiquitin-conjugating enzyme]-L-cysteine + [acceptor protein]-L-lysine = [E2 ubiquitin-conjugating enzyme]-L-cysteine + N(6)-ubiquitinyl-[acceptor protein]-L-lysine.. Its pathway is protein modification; protein ubiquitination. Functions as an E3 ligase that promotes polyubiquitination of SPL14/IPA1 for subsequent proteasomal degradation. Regulates plant architecture by modulating SPL14/IPA1 abundance. Promotes the degradation of SPL14/IPA1 in panicles, while it stabilizes SPL14/IPA1 in shoot apices. Ubiquitinates the SPL14/IPA1-mediated complex with 'Lys-48'-linked polyubiquitin in panicles and 'Lys-63'-linked polyubiquitin chains in the shoot apex. The polypeptide is E3 ubiquitin-protein ligase IPI1 (Oryza sativa subsp. japonica (Rice)).